The following is a 264-amino-acid chain: MPASREDSVYLAKLAEQAERYEEMVENMKAVASSGQELSVEERNLLSVAYKNVIGARRASWRIVSSIEQKEEAKGNESQVALIRDYRAKIEAELSKICEDILSVLSDHLITSAQTGESKVFYYKMKGDYHRYLAEFAIAEKRKEAADLSLEAYKAASDVAVTELPPTHPIRLGLALNFSVFYYEILNSPDRACHLAKQAFDDAVADLETLSEDSYKDSTLIMQLLRDNLTLWTDLSEAPAATEEQQQSSQAPAAQPTEGKADQE.

Residues 236–258 (SEAPAATEEQQQSSQAPAAQPTE) show a composition bias toward low complexity. The disordered stretch occupies residues 236–264 (SEAPAATEEQQQSSQAPAAQPTEGKADQE).

Belongs to the 14-3-3 family.

In Candida albicans (strain SC5314 / ATCC MYA-2876) (Yeast), this protein is 14-3-3 protein homolog (BMH1).